We begin with the raw amino-acid sequence, 290 residues long: Ribonuclease HIII (290 aa).

The region spanning 78–290 (LPLIGTDEVG…FKNTEKAKNA (213 aa)) is the RNase H type-2 domain. A divalent metal cation is bound by residues Asp-84, Glu-85, and Asp-187.

The protein belongs to the RNase HII family. RnhC subfamily. It depends on Mn(2+) as a cofactor. Requires Mg(2+) as cofactor.

The protein localises to the cytoplasm. The enzyme catalyses Endonucleolytic cleavage to 5'-phosphomonoester.. Functionally, endonuclease that specifically degrades the RNA of RNA-DNA hybrids. This chain is Ribonuclease HIII, found in Streptococcus pneumoniae serotype 2 (strain D39 / NCTC 7466).